The following is a 347-amino-acid chain: Protein RecA (347 aa).

Residue 80 to 87 (GPESSGKT) participates in ATP binding.

Belongs to the RecA family.

It localises to the cytoplasm. Its function is as follows. Can catalyze the hydrolysis of ATP in the presence of single-stranded DNA, the ATP-dependent uptake of single-stranded DNA by duplex DNA, and the ATP-dependent hybridization of homologous single-stranded DNAs. It interacts with LexA causing its activation and leading to its autocatalytic cleavage. This is Protein RecA from Chlorobaculum parvum (strain DSM 263 / NCIMB 8327) (Chlorobium vibrioforme subsp. thiosulfatophilum).